Consider the following 541-residue polypeptide: Reticulophagy regulator 2 (541 aa).

Helical transmembrane passes span 75–91 (LHSLVTAATLNGLFWLL), 99–115 (FFLLSISLLTYFLLDLW), and 199–219 (VPGIMISYIVLLSILLWPLVV). Residues 249 to 282 (LHHKHDKRKRQGKNAPPAGDEPLAETESESEAEL) are disordered. The span at 250 to 260 (HHKHDKRKRQG) shows a compositional bias: basic residues. The segment covering 270–280 (PLAETESESEA) has biased composition (acidic residues). Thr274 is subject to Phosphothreonine. Residues Ser276, Ser278, Ser286, and Ser306 each carry the phosphoserine modification. A Phosphothreonine modification is found at Thr329. 3 disordered regions span residues 331–389 (VSED…ADKE), 403–440 (THFNGAGSPQEGVKCPPGGPVETLSPEAVSGDLMAPSS), and 459–481 (PSVLPSLPQDSPQALTAPEEEEA). Residues Ser332, Ser339, and Ser342 each carry the phosphoserine modification. Low complexity predominate over residues 459-475 (PSVLPSLPQDSPQALTA). The short motif at 485–490 (EDFELL) is the LIR motif element. The disordered stretch occupies residues 496-541 (EQLNAELGLGPEMPPKPPDVLPPPPLGPDSHSLVQSDQEAHAVVEP). Residues 507-522 (EMPPKPPDVLPPPPLG) are compositionally biased toward pro residues.

Belongs to the RETREG family. Interacts with ATG8 family modifier proteins MAP1LC3A, MAP1LC3B, GABARAP, GABARAPL1 and GABARAPL2. Interacts with CANX.

The protein localises to the endoplasmic reticulum membrane. Functionally, endoplasmic reticulum (ER)-anchored autophagy regulator which exists in an inactive state under basal conditions but is activated following cellular stress. When activated, induces ER fragmentation and mediates ER delivery into lysosomes through sequestration into autophagosomes via interaction with ATG8 family proteins. Required for collagen quality control in a LIR motif-independent manner. The sequence is that of Reticulophagy regulator 2 (Retreg2) from Rattus norvegicus (Rat).